A 427-amino-acid chain; its full sequence is Ectoine TRAP transporter large permease protein TeaC (427 aa).

Helical transmembrane passes span 13-35 (LLLGFPMMIPLATASIIGFFMMF), 49-69 (MAGIRPASLIAVPMFILAADI), 79-99 (LINMVMAFIGHIKGGLAVSTA), 103-123 (TLFGAVSGSTQATVVAVGSPL), 147-167 (IAFLIPPSIGMIIYGIISGTS), 172-192 (FIAGIGPGLMILVMFAIYCVI), 216-236 (LALWPLGFPVIIIGGIYGGIF), 237-257 (SPTEAAAACVLYAVLLEFVVF), 273-293 (GLITAVVFILVAVGNSFSWII), 320-340 (ICVAFFVACMFVDPIVVILVL), 356-376 (VLVGILITLQVAIGSATPPFG), and 400-420 (FIFMLVLAAALLILFPQIALF).

Belongs to the TRAP transporter large permease family. As to quaternary structure, the complex comprises the extracytoplasmic solute receptor protein TeaA, and the two transmembrane proteins TeaB and TeaC.

Its subcellular location is the cell inner membrane. Part of the tripartite ATP-independent periplasmic (TRAP) transport system TeaABC involved in the uptake of ectoine and hydroxyectoine in response to osmotic upshock. Probably functions as a recovery system for synthesized ectoine that leaks out of the cell. The polypeptide is Ectoine TRAP transporter large permease protein TeaC (teaC) (Halomonas elongata (strain ATCC 33173 / DSM 2581 / NBRC 15536 / NCIMB 2198 / 1H9)).